Reading from the N-terminus, the 609-residue chain is Autophagy-related protein 22-1 (609 aa).

Transmembrane regions (helical) follow at residues 35–55 (YGWA…PITL), 117–137 (TASF…ILII), 151–171 (LLLM…LGVV), and 176–196 (MVGA…FVLL). Over residues 214–231 (AREPRPALDDSRAQEGHS) the composition is skewed to basic and acidic residues. Positions 214-240 (AREPRPALDDSRAQEGHSDTTNGIEHG) are disordered. The N-linked (GlcNAc...) asparagine glycan is linked to Asn-244. A helical membrane pass occupies residues 287–307 (IGIGYIGAIILQIVCILVVIA). N-linked (GlcNAc...) asparagine glycosylation occurs at Asn-309. The next 3 membrane-spanning stretches (helical) occupy residues 317 to 337 (LVLF…ALWL), 381 to 401 (ILLF…VSGT), and 415 to 435 (AALG…AFSW). The N-linked (GlcNAc...) asparagine glycan is linked to Asn-443. 4 helical membrane passes run 450 to 470 (IIAC…GFIP), 477 to 497 (FLGL…GLVM), 522 to 542 (ALYA…VGII), and 552 to 572 (AFVF…LVDV).

This sequence belongs to the ATG22 family.

The protein localises to the vacuole membrane. In terms of biological role, vacuolar effluxer which mediate the efflux of amino acids resulting from autophagic degradation. The release of autophagic amino acids allows the maintenance of protein synthesis and viability during nitrogen starvation. The chain is Autophagy-related protein 22-1 (atg22-1) from Aspergillus fumigatus (strain ATCC MYA-4609 / CBS 101355 / FGSC A1100 / Af293) (Neosartorya fumigata).